We begin with the raw amino-acid sequence, 64 residues long: MRLTNVLFKKVKSKRIMVVLESVVSGHQFNAFRDRLADKLEIIRFDPYIQQESLYRERKKIRSA.

The protein belongs to the bacterial ribosomal protein bL33 family. In terms of assembly, component of the mitochondrial ribosome large subunit (39S) which comprises a 16S rRNA and about 50 distinct proteins.

Its subcellular location is the mitochondrion. This chain is Large ribosomal subunit protein bL33m (mRpL33), found in Drosophila melanogaster (Fruit fly).